The sequence spans 74 residues: Sodium channel neurotoxin MeuNaTxalpha-6 (74 aa).

Positions 1-7 (LMTGVES) are cleaved as a signal peptide. Residues 9 to 73 (RDAYIAKPHN…VPIRIPGKCH (65 aa)) form the LCN-type CS-alpha/beta domain. Cystine bridges form between Cys-19/Cys-72, Cys-23/Cys-45, Cys-31/Cys-55, and Cys-35/Cys-57. Arg-74 is a propeptide (removed by a carboxypeptidase).

This sequence belongs to the long (4 C-C) scorpion toxin superfamily. Sodium channel inhibitor family. Alpha subfamily. Expressed by the venom gland.

The protein localises to the secreted. Its function is as follows. Alpha toxins bind voltage-independently at site-3 of sodium channels (Nav) and inhibit the inactivation of the activated channels, thereby blocking neuronal transmission. The polypeptide is Sodium channel neurotoxin MeuNaTxalpha-6 (Mesobuthus eupeus (Lesser Asian scorpion)).